Reading from the N-terminus, the 2141-residue chain is Oxygen-regulated protein 1 (2141 aa).

Polar residues predominate over residues 1–10; that stretch reads MSETSSTSVS. Residues 1–20 form a disordered region; the sequence is MSETSSTSVSMIHRSFEGQG. The region spanning 34–116 is the Doublecortin 1 domain; that stretch reads KKISFYKSGD…RRKVQPVDLD (83 aa). Residues 126 to 149 are disordered; the sequence is LSSRAISAHAQRSPPTSIGAAGAP. The 80-residue stretch at 156–235 folds into the Doublecortin 2 domain; sequence RRLLVFRNGD…REPFKPGNYD (80 aa). Disordered regions lie at residues 259 to 278, 1432 to 1458, and 1589 to 1612; these read RSES…SQIY, YTSS…SSER, and DWSE…GPNG. Residues 268–278 show a composition bias toward polar residues; the sequence is HVPSSPRSQIY. Residues 1435 to 1444 show a composition bias toward basic and acidic residues; the sequence is SDKEDSKTSE. Composition is skewed to polar residues over residues 1448-1458 and 1598-1610; these read SITNSMTSSER and ENEQ…SDGP.

As to quaternary structure, interacts (via the doublecortin domains) with microtubules. Interacts with RP1L1. Interacts with MAK.

The protein resides in the cytoplasm. The protein localises to the cytoskeleton. It localises to the cilium axoneme. It is found in the cell projection. Its subcellular location is the cilium. The protein resides in the photoreceptor outer segment. Functionally, microtubule-associated protein regulating the stability and length of the microtubule-based axoneme of photoreceptors. Required for the differentiation of photoreceptor cells, it plays a role in the organization of the outer segment of rod and cone photoreceptors ensuring the correct orientation and higher-order stacking of outer segment disks along the photoreceptor axoneme. In Canis lupus familiaris (Dog), this protein is Oxygen-regulated protein 1 (RP1).